We begin with the raw amino-acid sequence, 282 residues long: Pantothenate synthetase (282 aa).

30–37 (MGNLHLGH) lines the ATP pocket. The active-site Proton donor is the His37. Position 61 (Gln61) interacts with (R)-pantoate. Residue Gln61 coordinates beta-alanine. 149 to 152 (GQKD) serves as a coordination point for ATP. Gln155 is a (R)-pantoate binding site. ATP-binding positions include Ile178 and 186–189 (MSSR).

This sequence belongs to the pantothenate synthetase family. Homodimer.

It localises to the cytoplasm. The enzyme catalyses (R)-pantoate + beta-alanine + ATP = (R)-pantothenate + AMP + diphosphate + H(+). Its pathway is cofactor biosynthesis; (R)-pantothenate biosynthesis; (R)-pantothenate from (R)-pantoate and beta-alanine: step 1/1. In terms of biological role, catalyzes the condensation of pantoate with beta-alanine in an ATP-dependent reaction via a pantoyl-adenylate intermediate. The protein is Pantothenate synthetase of Shewanella piezotolerans (strain WP3 / JCM 13877).